A 347-amino-acid polypeptide reads, in one-letter code: G-protein coupled receptor homolog U12 (347 aa).

6 helical membrane passes run 36-56, 67-87, 103-124, 147-167, 194-214, and 236-256; these read GITLTTSIPMIIIVVTTMILY, FYVITLFASDFVLMWCVFFMT, LVYFIYHAVCSYSISMLAIIAT, IGILLLASSMCAIPTALFVKT, IVFSFIWGVLPTMVFSFFYVI, and ILLLSFLLIQIPYIAILICEI. Cys-101 and Cys-176 form a disulfide bridge. The segment at 321–347 is disordered; sequence QKRKDSDASEHDQNSKSKASVEKNQPL. Basic and acidic residues predominate over residues 322–341; it reads KRKDSDASEHDQNSKSKASV.

This sequence belongs to the G-protein coupled receptor 1 family.

The protein localises to the membrane. In terms of biological role, probable G-protein coupled receptor. The chain is G-protein coupled receptor homolog U12 (U12) from Homo sapiens (Human).